Reading from the N-terminus, the 254-residue chain is Leucyl/phenylalanyl-tRNA--protein transferase (254 aa).

The protein belongs to the L/F-transferase family.

Its subcellular location is the cytoplasm. The enzyme catalyses N-terminal L-lysyl-[protein] + L-leucyl-tRNA(Leu) = N-terminal L-leucyl-L-lysyl-[protein] + tRNA(Leu) + H(+). It catalyses the reaction N-terminal L-arginyl-[protein] + L-leucyl-tRNA(Leu) = N-terminal L-leucyl-L-arginyl-[protein] + tRNA(Leu) + H(+). The catalysed reaction is L-phenylalanyl-tRNA(Phe) + an N-terminal L-alpha-aminoacyl-[protein] = an N-terminal L-phenylalanyl-L-alpha-aminoacyl-[protein] + tRNA(Phe). In terms of biological role, functions in the N-end rule pathway of protein degradation where it conjugates Leu, Phe and, less efficiently, Met from aminoacyl-tRNAs to the N-termini of proteins containing an N-terminal arginine or lysine. This is Leucyl/phenylalanyl-tRNA--protein transferase from Burkholderia ambifaria (strain MC40-6).